A 96-amino-acid polypeptide reads, in one-letter code: Large ribosomal subunit protein eL43 (96 aa).

A C4-type zinc finger spans residues 39–60 (CTFCGKTATKRTCVGIWKCKKC).

It belongs to the eukaryotic ribosomal protein eL43 family. Component of the large ribosomal subunit. Mature ribosomes consist of a small (40S) and a large (60S) subunit. The 40S subunit contains about 32 different proteins and 1 molecule of RNA (18S). The 60S subunit contains about 42 different proteins and 3 molecules of RNA (28S, 5.8S and 5S).

It localises to the cytoplasm. In terms of biological role, component of the ribosome, a large ribonucleoprotein complex responsible for the synthesis of proteins in the cell. The small ribosomal subunit (SSU) binds messenger RNAs (mRNAs) and translates the encoded message by selecting cognate aminoacyl-transfer RNA (tRNA) molecules. The large subunit (LSU) contains the ribosomal catalytic site termed the peptidyl transferase center (PTC), which catalyzes the formation of peptide bonds, thereby polymerizing the amino acids delivered by tRNAs into a polypeptide chain. The nascent polypeptides leave the ribosome through a tunnel in the LSU and interact with protein factors that function in enzymatic processing, targeting, and the membrane insertion of nascent chains at the exit of the ribosomal tunnel. The polypeptide is Large ribosomal subunit protein eL43 (Plasmodium falciparum (isolate 3D7)).